A 239-amino-acid chain; its full sequence is Sensory rhodopsin-2 (239 aa).

At 1–3 (MVG) the chain is on the extracellular side. A helical membrane pass occupies residues 4–25 (LTTLFWLGAIGMLVGTLAFAWA). Residues 26–33 (GRDAGSGE) are Cytoplasmic-facing. A helical membrane pass occupies residues 34–55 (RRYYVTLVGISGIAAVAYVVMA). At 56-69 (LGVGWVPVAERTVF) the chain is on the extracellular side. The helical transmembrane segment at 70–91 (APRYIDWILTTPLIVYFLGLLA) threads the bilayer. Residues 92–94 (GLD) are Cytoplasmic-facing. Residues 95-117 (SREFGIVITLNTVVMLAGFAGAM) traverse the membrane as a helical segment. Topologically, residues 118 to 121 (VPGI) are extracellular. The helical transmembrane segment at 122-149 (ERYALFGMGAVAFLGLVYYLVGPMTESA) threads the bilayer. The Cytoplasmic portion of the chain corresponds to 150 to 153 (SQRS). A helical transmembrane segment spans residues 154-181 (SGIKSLYVRLRNLTVILWAIYPFIWLLG). At 182–189 (PPGVALLT) the chain is on the extracellular side. Residues 190-222 (PTVDVALIVYLDLVTKVGFGFIALDAAATLRAE) traverse the membrane as a helical segment. Position 205 is an N6-(retinylidene)lysine (Lys205). Residues 223-239 (HGESLAGVDTDAPAVAD) are Cytoplasmic-facing.

This sequence belongs to the archaeal/bacterial/fungal opsin family. In terms of assembly, homodimer. Interacts with HTR-II.

It localises to the cell membrane. Functionally, photophobic photoreceptor responsible for the negative phototaxis. Activates the sensory rhodopsin II transducer (HTR-II) in response to blue light. The polypeptide is Sensory rhodopsin-2 (sop2) (Natronomonas pharaonis (Natronobacterium pharaonis)).